A 56-amino-acid chain; its full sequence is UPF0434 protein CbuG_1535 (56 aa).

The protein belongs to the UPF0434 family.

The protein is UPF0434 protein CbuG_1535 of Coxiella burnetii (strain CbuG_Q212) (Coxiella burnetii (strain Q212)).